The sequence spans 369 residues: Molybdenum import ATP-binding protein ModC (369 aa).

One can recognise an ABC transporter domain in the interval 4 to 239 (LQLRAVVADR…PRSRFGARIA (236 aa)). Position 31 to 38 (31 to 38 (GPNGAGKS)) interacts with ATP. The Mop domain maps to 293–361 (HGSPRNIVGL…VKAQEVALHP (69 aa)).

This sequence belongs to the ABC transporter superfamily. Molybdate importer (TC 3.A.1.8) family. The complex is composed of two ATP-binding proteins (ModC), two transmembrane proteins (ModB) and a solute-binding protein (ModA).

The protein localises to the cell membrane. It carries out the reaction molybdate(out) + ATP + H2O = molybdate(in) + ADP + phosphate + H(+). Part of the ABC transporter complex ModABC involved in molybdenum import. Responsible for energy coupling to the transport system. This chain is Molybdenum import ATP-binding protein ModC, found in Mycobacterium tuberculosis (strain CDC 1551 / Oshkosh).